The following is a 153-amino-acid chain: MKTFSATPADIDKKWILIDAEGVVLGRLASIVATRLRGKHKPSFTPHMDCGDNVVIINADKVQLTGKKREESHYWHTGHPGGIKSRTKAQILEGKHPERIVTLAVKRMLPGNRLSRQIMTNLRVYAGSEHPHEAQSPEVLDVTSMNSKNTRSA.

The segment at 128–153 is disordered; the sequence is SEHPHEAQSPEVLDVTSMNSKNTRSA. Residues 143-153 show a composition bias toward polar residues; that stretch reads TSMNSKNTRSA.

The protein belongs to the universal ribosomal protein uL13 family. In terms of assembly, part of the 50S ribosomal subunit.

Functionally, this protein is one of the early assembly proteins of the 50S ribosomal subunit, although it is not seen to bind rRNA by itself. It is important during the early stages of 50S assembly. This chain is Large ribosomal subunit protein uL13, found in Roseobacter denitrificans (strain ATCC 33942 / OCh 114) (Erythrobacter sp. (strain OCh 114)).